Consider the following 1047-residue polypeptide: MSFGQGGGGPFGGPPRDGGGTAGGQSGPFGAFGPFGGAPRGPGDDGDRGPGGPFGGGGSSAARGRGRPGRPSALVLTIIAVAVLVGLFVVFTNVYTDVLWFSQLGFTEVFWTEVLAKGALFLIAGLGMALAVWLAIRTAWRHRPADASAAARDSLSQVQRQLEPIRRLVFLGVPLVLGVFAGSTAMNGWNTVLLFLNQVPYGQADPEFGLDLMFFMATLPFLTLVVGYLISVVLVSGITGLLVHYLYGAVRVEEGGGVRITPAARAHIGITLAVFLLLQGVNFWLNRYRTTQSQTGNWAGALYTDVNAVIPTSAILAVTAVIVAGLFVWTVVSGRWRLSLIGTAVLVITALVVGTAYPFIVQEYQVKPSERTLESQYIERNIAMTREAYGLDDVEVTNYEGATDTEAGALAGEEANTANVRLMDPNLISQTFGQLQQFRPYYSFPTTLHVDRYEVDGQTRDTILAARDVNVDDSQSWVNRHTIYTHGYGMVVADASEVAAGGRPQWLLSEIPTRGPLASDQDYEPRIYFGHNSPSYSVVGAPEGAPAVERDRPQTADSQEDTAYTFSGDGGPSVGNLFNRLAYAVKFGSPELVLSSDVNEASQILYDRDPAERVRKVAPYLTVDTAPYPAIVDGRVQWIVDAYTTSDQFPYSTAQQLGEVTVDSLSQGQNPALQGRVNYIRNSVKATVDAYDGSVSLYAWDDQDPLLQAWQNVYPSSLRPYSEMSAGLLDHVRYPEDMFKVQRELLGRYHVTDADDFYENNDAWSVPSDPTREEDVKQPPYYMTLQMPGQDEPAFSLTSSYIPQITDGAQQRNVLYGFLSAAGDAGTGEDGVKAEGYGQLRLLELPRSTTVPGPGQAQANFDSNADVSRELNLLRQGASEVLNGNMITLPVAGGILYVQPVYVRSSGGTTYPTLRKVLVSFGDKVGFADTLQEALDQVFDGDSGAVTPEEKQAEAPAPGEKPTAPGTVEEELSAALEEAQDALTQGQERLAEGDWAGYGEQQKRLNEALKRATAADDALGGDAPAQEQAPAEASPAPSSSPSPTPSG.

Composition is skewed to gly residues over residues 1-27 (MSFGQGGGGPFGGPPRDGGGTAGGQSG) and 49-59 (GPGGPFGGGGS). A disordered region spans residues 1–66 (MSFGQGGGGP…GGSSAARGRG (66 aa)). The next 7 membrane-spanning stretches (helical) occupy residues 71–91 (PSALVLTIIAVAVLVGLFVVF), 114–134 (VLAKGALFLIAGLGMALAVWL), 168–188 (LVFLGVPLVLGVFAGSTAMNG), 214–234 (FFMATLPFLTLVVGYLISVVL), 266–286 (AHIGITLAVFLLLQGVNFWLN), 314–334 (AILAVTAVIVAGLFVWTVVSG), and 341–361 (IGTAVLVITALVVGTAYPFIV). 3 disordered regions span residues 544-568 (GAPAVERDRPQTADSQEDTAYTFSG), 941-965 (GDSGAVTPEEKQAEAPAPGEKPTAP), and 1007-1047 (EALK…TPSG). The span at 555 to 565 (TADSQEDTAYT) shows a compositional bias: polar residues. A compositionally biased stretch (low complexity) spans 1015–1037 (ADDALGGDAPAQEQAPAEASPAP). A compositionally biased stretch (pro residues) spans 1038-1047 (SSSPSPTPSG).

This sequence belongs to the UPF0182 family.

It localises to the cell membrane. The polypeptide is UPF0182 protein Mlut_14990 (Micrococcus luteus (strain ATCC 4698 / DSM 20030 / JCM 1464 / CCM 169 / CCUG 5858 / IAM 1056 / NBRC 3333 / NCIMB 9278 / NCTC 2665 / VKM Ac-2230) (Micrococcus lysodeikticus)).